A 123-amino-acid chain; its full sequence is Small ribosomal subunit protein uS12c (123 aa).

The span at 1 to 20 (MPTIQQLIRNTRQPTQNRTK) shows a compositional bias: polar residues. Positions 1 to 27 (MPTIQQLIRNTRQPTQNRTKSPALKAC) are disordered.

It belongs to the universal ribosomal protein uS12 family. Part of the 30S ribosomal subunit.

It is found in the plastid. The protein resides in the chloroplast. With S4 and S5 plays an important role in translational accuracy. Located at the interface of the 30S and 50S subunits. The sequence is that of Small ribosomal subunit protein uS12c (rps12) from Zygnema circumcarinatum (Green alga).